Here is a 735-residue protein sequence, read N- to C-terminus: Protein argonaute (735 aa).

An N-terminal domain region spans residues 1-94; it reads MDLLSNLRRS…LVQMGTKQLD (94 aa). A linker L1 region spans residues 95-180; sequence CRNDAHRCAL…IDIHHRFYTP (86 aa). The segment at 181-284 is PAZ domain; sequence WTVHQWLEQY…SPSLTMEMLA (104 aa). Residues 285-369 are linker L2; it reads KVAEDSTVCD…SKTADIRNKG (85 aa). Positions 370-498 are mid domain; the sequence is CAKIGETSFG…LLCKAGWQPI (129 aa). Residues 499 to 735 are PIWI domain; the sequence is QLESVDHPEV…NISRDKLIAV (237 aa). Residues D516, E550, D584, and D709 contribute to the active site. D516 contacts Mn(2+). Mn(2+) contacts are provided by D584, D709, and V735.

It belongs to the argonaute family. Long pAgo subfamily. Copurifies with SSB proteins Synpcc7942_0079 and Synpcc7942_0301 as well as other proteins. It depends on Mn(2+) as a cofactor.

A DNA-guided ssDNA endonuclease that might play a role in defense against invading mobile genetic elements. Uses short ssDNA sequences as guides (gDNA) to bind complementary target strands, resulting in cleavage of the target DNA (tDNA). The cleavage site is 10 nucleotides (nt) downstream of the target residue base-paired with the 5'-end of the gDNA. Both 5'-P and 5'-OH gDNAs confer activity; a 5'-OH guide cleaves between nt 10-11 and nt 11-12. Guide DNA mismatches in the seed (nt 2-9) can enhance activity, mismatches 1-5 nt after the cleavage site block activity. Has no appreciable activity with guide RNA or on target RNA. In situ binds to 5'-phosphorylated DNA 14-20 nt in length; small DNA maps over the chromosome and plasmid with some preference for the replication origin and the probable termination site. Also has weak guide-independent nuclease activity on DNA called 'chopping'. Overexpression of wild-type or catalytically inactive mutant has no visible effect during growth under continuous high light for up to a month. The chain is Protein argonaute from Synechococcus elongatus (strain ATCC 33912 / PCC 7942 / FACHB-805) (Anacystis nidulans R2).